The sequence spans 382 residues: F-box/kelch-repeat protein KIB1 (382 aa).

In terms of domain architecture, F-box spans serine 22–threonine 69. Kelch repeat units lie at residues isoleucine 73 to glycine 117, valine 159 to asparagine 209, and isoleucine 259 to glutamate 306.

In terms of assembly, part of a SCF (SKP1-cullin-F-box) protein ligase complex. Binds directly to several GSK3 family proteins such as SKP1A/ASK1, ASK1/SK11, ASK3/SK12, ASK5/SK13, ASK7/BIN2/SK21, ASK9/SK22 and ASK6/SK23. Interacts with ASK7/BIN2/SK21 in a brassinosteroid (BR)-dependent manner. Expressed in seedlings, leaves, stems, flower buds and flowers.

The protein resides in the cytoplasm. The protein localises to the nucleus. Its subcellular location is the nucleolus. Functionally, component of SCF(ASK-cullin-F-box) E3 ubiquitin ligase complexes, which may mediate the ubiquitination and subsequent proteasomal degradation of target proteins. Required for brassinosteroid (BR) signal transduction. Mediates ASK7/BIN2/SK21 inactivation both by competing with substrate binding (e.g. BZR1) and by promoting its ubiquitination and subsequent proteasomal degradation. In Arabidopsis thaliana (Mouse-ear cress), this protein is F-box/kelch-repeat protein KIB1.